A 407-amino-acid polypeptide reads, in one-letter code: Argininosuccinate synthase (407 aa).

ATP contacts are provided by residues 16–24 and A44; that span reads AYSGGLDTS. The L-citrulline site is built by Y96 and S101. Position 126 (G126) interacts with ATP. L-aspartate is bound by residues T128, N132, and D133. Position 132 (N132) interacts with L-citrulline. The L-citrulline site is built by R136, S185, S194, E270, and Y282.

This sequence belongs to the argininosuccinate synthase family. Type 1 subfamily. Homotetramer.

It is found in the cytoplasm. The catalysed reaction is L-citrulline + L-aspartate + ATP = 2-(N(omega)-L-arginino)succinate + AMP + diphosphate + H(+). It functions in the pathway amino-acid biosynthesis; L-arginine biosynthesis; L-arginine from L-ornithine and carbamoyl phosphate: step 2/3. This Shewanella frigidimarina (strain NCIMB 400) protein is Argininosuccinate synthase.